A 307-amino-acid polypeptide reads, in one-letter code: MSITAAQVKELRELSGAGMMDCKAALMETNGDIETAVDWLRKKGMAKADKKAGRTAAEGLIGIASKGLSAVVVEVNSETDFVARNDAFQTIVRNVATAALDTEGSVESVSASIYPGSEKTVEEAIKDAIGTIGENMAFRRSAKLSVQNGAVATYIHNSVADGLGKLGVLVGIETTGDKEVAVDFARKVAMHIAATNPLALTVADVDASIVEREKAIFSDQARQSGKPENIIEKMVEGRIRKFYEEVVLLSQAFVMNPDVTVEASLKDAEKMIGAPAKITGFVRFALGEGVEKEEVDFAAEVAAAAKG.

The segment at 79-82 (TDFV) is involved in Mg(2+) ion dislocation from EF-Tu.

Belongs to the EF-Ts family.

It is found in the cytoplasm. Associates with the EF-Tu.GDP complex and induces the exchange of GDP to GTP. It remains bound to the aminoacyl-tRNA.EF-Tu.GTP complex up to the GTP hydrolysis stage on the ribosome. This chain is Elongation factor Ts, found in Bartonella bacilliformis (strain ATCC 35685 / KC583 / Herrer 020/F12,63).